The sequence spans 369 residues: Anhydro-N-acetylmuramic acid kinase (369 aa).

ATP is bound at residue 12–19 (GTSMDGVD).

Belongs to the anhydro-N-acetylmuramic acid kinase family.

It carries out the reaction 1,6-anhydro-N-acetyl-beta-muramate + ATP + H2O = N-acetyl-D-muramate 6-phosphate + ADP + H(+). The protein operates within amino-sugar metabolism; 1,6-anhydro-N-acetylmuramate degradation. It participates in cell wall biogenesis; peptidoglycan recycling. Catalyzes the specific phosphorylation of 1,6-anhydro-N-acetylmuramic acid (anhMurNAc) with the simultaneous cleavage of the 1,6-anhydro ring, generating MurNAc-6-P. Is required for the utilization of anhMurNAc either imported from the medium or derived from its own cell wall murein, and thus plays a role in cell wall recycling. In Shewanella halifaxensis (strain HAW-EB4), this protein is Anhydro-N-acetylmuramic acid kinase.